We begin with the raw amino-acid sequence, 277 residues long: MSKANLVIYVISDSIGETAEQVAKAAVSQFKTEDYEIRRFPYINEKRQILEILEEAKNENAVIAFTIVISELREFLIEEAVHLNIPYADVITPILSAMESVLEIPAKKEPGLIRKLDERYFRKVEAIEFAVKYDDGKDTRGLKQADIVLTGISRTSKTPLSMYLAHKNLKVANVPLVPEVAPPRELFEINPKKIIGLTTNPVKLIEIRQERLKALGLKNEANYASMERIFEELEYADGIMKRLGCPVIDVSTKAIEESAGIILEIFKEMGHKFSNGK.

151 to 158 (GISRTSKT) provides a ligand contact to ADP.

This sequence belongs to the pyruvate, phosphate/water dikinase regulatory protein family. PDRP subfamily.

It carries out the reaction N(tele)-phospho-L-histidyl/L-threonyl-[pyruvate, phosphate dikinase] + ADP = N(tele)-phospho-L-histidyl/O-phospho-L-threonyl-[pyruvate, phosphate dikinase] + AMP + H(+). It catalyses the reaction N(tele)-phospho-L-histidyl/O-phospho-L-threonyl-[pyruvate, phosphate dikinase] + phosphate + H(+) = N(tele)-phospho-L-histidyl/L-threonyl-[pyruvate, phosphate dikinase] + diphosphate. Bifunctional serine/threonine kinase and phosphorylase involved in the regulation of the pyruvate, phosphate dikinase (PPDK) by catalyzing its phosphorylation/dephosphorylation. This is Putative pyruvate, phosphate dikinase regulatory protein from Alkaliphilus oremlandii (strain OhILAs) (Clostridium oremlandii (strain OhILAs)).